We begin with the raw amino-acid sequence, 138 residues long: MQRITITLDEELLDVIDRRVASQGYQGRSEAIRDLLRAGMRESEALPDDAACVAVVSYLYDHSTRELPRRLNQTLHAHHDLTRSTLHVHLDAGHCLEVSVLQGESGRIGELSRQLMVERGVEHGQVQVMPAPGQAKVR.

Ni(2+)-binding residues include His76, His87, His89, and Cys95.

Belongs to the transcriptional regulatory CopG/NikR family. The cofactor is Ni(2+).

Functionally, transcriptional regulator. The chain is Putative nickel-responsive regulator from Pseudomonas putida (strain W619).